The chain runs to 291 residues: ATP synthase gamma chain (291 aa).

The protein belongs to the ATPase gamma chain family. As to quaternary structure, F-type ATPases have 2 components, CF(1) - the catalytic core - and CF(0) - the membrane proton channel. CF(1) has five subunits: alpha(3), beta(3), gamma(1), delta(1), epsilon(1). CF(0) has three main subunits: a, b and c.

The protein resides in the cell inner membrane. Its function is as follows. Produces ATP from ADP in the presence of a proton gradient across the membrane. The gamma chain is believed to be important in regulating ATPase activity and the flow of protons through the CF(0) complex. The sequence is that of ATP synthase gamma chain from Methylobacillus flagellatus (strain ATCC 51484 / DSM 6875 / VKM B-1610 / KT).